A 520-amino-acid chain; its full sequence is GMP synthase [glutamine-hydrolyzing] (520 aa).

In terms of domain architecture, Glutamine amidotransferase type-1 spans S9–D202. The active-site Nucleophile is the C86. Residues H176 and E178 contribute to the active site. One can recognise a GMPS ATP-PPase domain in the interval W203–R395. An ATP-binding site is contributed by S230–S236.

Homodimer.

The catalysed reaction is XMP + L-glutamine + ATP + H2O = GMP + L-glutamate + AMP + diphosphate + 2 H(+). Its pathway is purine metabolism; GMP biosynthesis; GMP from XMP (L-Gln route): step 1/1. In terms of biological role, catalyzes the synthesis of GMP from XMP. In Allorhizobium ampelinum (strain ATCC BAA-846 / DSM 112012 / S4) (Agrobacterium vitis (strain S4)), this protein is GMP synthase [glutamine-hydrolyzing].